A 1882-amino-acid chain; its full sequence is uncharacterized protein (1882 aa).

Residues 16-36 (FFLLFGIIFVLFSIIFLETSI) form a helical membrane-spanning segment. 4 disordered regions span residues 103–129 (DFGSDSEKKDSTTKSSDNNPRKGDVND), 220–306 (FPGD…ESET), 492–513 (VALAQQQQDKQESSADDGVKDP), and 658–698 (QTDE…TKST). The span at 221-239 (PGDKGKGEDKKTTKKKSEI) shows a compositional bias: basic and acidic residues. Polar residues predominate over residues 240-249 (KQASSATTVL). Basic and acidic residues-rich tracts occupy residues 259–275 (TDAKETTNNEEPKKDSN), 284–294 (NKDKVWFKSDE), and 500–511 (DKQESSADDGVK). The span at 667 to 698 (AKTTQGTTDSLTQLADASSSSSSSSTGDTKST) shows a compositional bias: low complexity. Helical transmembrane passes span 987 to 1007 (ASVVIAAFLSILALYLTILLI), 1037 to 1057 (VFAGIVALASSFFGVLFAFLL), 1080 to 1100 (WISFFGSMLLIFVIFQFISWI), and 1154 to 1174 (LFTYVGLSSIALLLIGIAGTI). 2 disordered regions span residues 1233–1253 (DQIQQQQQQQQQQGNDKEHPY) and 1572–1598 (KDGQSTDDSGGTSSGGGSCGGGSTSST). Residues 1234–1245 (QIQQQQQQQQQQ) are compositionally biased toward low complexity. Residues 1583–1594 (TSSGGGSCGGGS) are compositionally biased toward gly residues. The next 4 membrane-spanning stretches (helical) occupy residues 1759–1779 (FLLGTIIPFIFITCVVLGISM), 1807–1827 (FFIPAFVLSLLISIAILAGLL), 1828–1848 (VGVQALVFGVAQVFLTNVFEF), and 1851–1871 (YMVGIVLFGATIFVIGSYFWI).

It belongs to the ABC-4 integral membrane protein family.

Its subcellular location is the cell membrane. This is an uncharacterized protein from Mycoplasma pneumoniae (strain ATCC 29342 / M129 / Subtype 1) (Mycoplasmoides pneumoniae).